Here is a 302-residue protein sequence, read N- to C-terminus: Pyridoxal 5'-phosphate synthase subunit PdxS (302 aa).

D-ribose 5-phosphate is bound at residue D32. K89 (schiff-base intermediate with D-ribose 5-phosphate) is an active-site residue. Position 161 (G161) interacts with D-ribose 5-phosphate. A D-glyceraldehyde 3-phosphate-binding site is contributed by R173. D-ribose 5-phosphate-binding positions include G222 and 243 to 244 (GS). The interval 276–302 (ASNIGEGMQGDPNADLPEDERMQDRGN) is disordered.

Belongs to the PdxS/SNZ family. In the presence of PdxT, forms a dodecamer of heterodimers.

It catalyses the reaction aldehydo-D-ribose 5-phosphate + D-glyceraldehyde 3-phosphate + L-glutamine = pyridoxal 5'-phosphate + L-glutamate + phosphate + 3 H2O + H(+). It functions in the pathway cofactor biosynthesis; pyridoxal 5'-phosphate biosynthesis. Functionally, catalyzes the formation of pyridoxal 5'-phosphate from ribose 5-phosphate (RBP), glyceraldehyde 3-phosphate (G3P) and ammonia. The ammonia is provided by the PdxT subunit. Can also use ribulose 5-phosphate and dihydroxyacetone phosphate as substrates, resulting from enzyme-catalyzed isomerization of RBP and G3P, respectively. The sequence is that of Pyridoxal 5'-phosphate synthase subunit PdxS from Halobacterium salinarum (strain ATCC 29341 / DSM 671 / R1).